The following is a 575-amino-acid chain: 2-succinyl-5-enolpyruvyl-6-hydroxy-3-cyclohexene-1-carboxylate synthase (575 aa).

This sequence belongs to the TPP enzyme family. MenD subfamily. Homodimer. Mg(2+) serves as cofactor. The cofactor is Mn(2+). Thiamine diphosphate is required as a cofactor.

It carries out the reaction isochorismate + 2-oxoglutarate + H(+) = 5-enolpyruvoyl-6-hydroxy-2-succinyl-cyclohex-3-ene-1-carboxylate + CO2. The protein operates within quinol/quinone metabolism; 1,4-dihydroxy-2-naphthoate biosynthesis; 1,4-dihydroxy-2-naphthoate from chorismate: step 2/7. It participates in quinol/quinone metabolism; menaquinone biosynthesis. Its function is as follows. Catalyzes the thiamine diphosphate-dependent decarboxylation of 2-oxoglutarate and the subsequent addition of the resulting succinic semialdehyde-thiamine pyrophosphate anion to isochorismate to yield 2-succinyl-5-enolpyruvyl-6-hydroxy-3-cyclohexene-1-carboxylate (SEPHCHC). This Syntrophus aciditrophicus (strain SB) protein is 2-succinyl-5-enolpyruvyl-6-hydroxy-3-cyclohexene-1-carboxylate synthase.